We begin with the raw amino-acid sequence, 94 residues long: Protein translocase subunit SecE (94 aa).

The tract at residues Met-1 to Lys-32 is disordered. Positions Lys-22–Lys-32 are enriched in basic residues. The helical transmembrane segment at Gln-59–Ile-81 threads the bilayer.

Belongs to the SecE/SEC61-gamma family. As to quaternary structure, component of the Sec protein translocase complex. Heterotrimer consisting of SecY, SecE and SecG subunits. The heterotrimers can form oligomers, although 1 heterotrimer is thought to be able to translocate proteins. Interacts with the ribosome. Interacts with SecDF, and other proteins may be involved. Interacts with SecA.

The protein localises to the cell membrane. Functionally, essential subunit of the Sec protein translocation channel SecYEG. Clamps together the 2 halves of SecY. May contact the channel plug during translocation. The protein is Protein translocase subunit SecE of Streptomyces galbus.